Here is a 383-residue protein sequence, read N- to C-terminus: ATP phosphoribosyltransferase regulatory subunit (383 aa).

Belongs to the class-II aminoacyl-tRNA synthetase family. HisZ subfamily. In terms of assembly, heteromultimer composed of HisG and HisZ subunits.

The protein resides in the cytoplasm. The protein operates within amino-acid biosynthesis; L-histidine biosynthesis; L-histidine from 5-phospho-alpha-D-ribose 1-diphosphate: step 1/9. Functionally, required for the first step of histidine biosynthesis. May allow the feedback regulation of ATP phosphoribosyltransferase activity by histidine. In Cupriavidus taiwanensis (strain DSM 17343 / BCRC 17206 / CCUG 44338 / CIP 107171 / LMG 19424 / R1) (Ralstonia taiwanensis (strain LMG 19424)), this protein is ATP phosphoribosyltransferase regulatory subunit.